The chain runs to 195 residues: Small ribosomal subunit protein uS4c (195 aa).

Positions 82-143 constitute an S4 RNA-binding domain; that stretch reads MRLDNILFRL…KQRSKALIQN (62 aa).

The protein belongs to the universal ribosomal protein uS4 family. Part of the 30S ribosomal subunit. Contacts protein S5. The interaction surface between S4 and S5 is involved in control of translational fidelity.

Its subcellular location is the plastid. It localises to the chloroplast. Its function is as follows. One of the primary rRNA binding proteins, it binds directly to 16S rRNA where it nucleates assembly of the body of the 30S subunit. In terms of biological role, with S5 and S12 plays an important role in translational accuracy. The polypeptide is Small ribosomal subunit protein uS4c (rps4) (Gladiolus murielae (Abyssinian gladiolus)).